Consider the following 513-residue polypeptide: Secreted LysM effector Vd6LysM (513 aa).

The signal sequence occupies residues 1–19 (MSFIKSLLLAAAAVASVSA). LysM domains follow at residues 38-85 (SYWV…SYCV), 136-182 (KFHW…NVCV), 219-265 (KFHW…QVCV), and 302-348 (KFHW…QVCV). Positions 357-367 (TTTRPPTTTAP) are enriched in low complexity. The segment at 357-377 (TTTRPPTTTAPGNGVSTPQPT) is disordered. 2 consecutive LysM domains span residues 387 to 433 (KFHW…NVCV) and 465 to 511 (KFHW…NVCV).

It belongs to the secreted LysM effector family.

Functionally, might have a role in sequestration of chitin oligosaccharides (breakdown products of fungal cell walls that are released during invasion and act as triggers of host immunity) to dampen host defense. Does not play an important role during host colonization. This chain is Secreted LysM effector Vd6LysM, found in Verticillium dahliae (strain VdLs.17 / ATCC MYA-4575 / FGSC 10137) (Verticillium wilt).